Here is a 261-residue protein sequence, read N- to C-terminus: Nickel import ATP-binding protein NikD (261 aa).

The region spanning 6 to 248 (LRIEGLTIAT…PRHDATRALV (243 aa)) is the ABC transporter domain. 41–48 (GASGSGKS) provides a ligand contact to ATP.

It belongs to the ABC transporter superfamily. Nickel importer (TC 3.A.1.5.3) family. In terms of assembly, the complex is composed of two ATP-binding proteins (NikD and NikE), two transmembrane proteins (NikB and NikC) and a solute-binding protein (NikA).

It is found in the cell inner membrane. It catalyses the reaction Ni(2+)(out) + ATP + H2O = Ni(2+)(in) + ADP + phosphate + H(+). Functionally, part of the ABC transporter complex NikABCDE involved in nickel import. Responsible for energy coupling to the transport system. The chain is Nickel import ATP-binding protein NikD from Rhodospirillum rubrum (strain ATCC 11170 / ATH 1.1.1 / DSM 467 / LMG 4362 / NCIMB 8255 / S1).